We begin with the raw amino-acid sequence, 343 residues long: MPDPRFYEDLGPVPLAELAKLGGADLPAGADGARLIRAAAVLAHAGPDTVTFLTDRKHLPGLARLEGACFVQARDASVLPDGCIPLVTRNPHGAYALAAQTLHRPRAVGSDAIAPDVVLEPGVELGAGVVLGPGVKVGRGTRIGPNAVVGAGVAIGRECDIGANVTLGFALLGDRVRILAGAVIGEPGFGATAGAQGLIDIPQLGRVIIQDGVTIGANTTIDRGAFDDTVIGENTKIDNLVQIAHNVRVGRNCVMAAHTGISGSVEIGEGAQFGGRAGVADHVTIGAGARVGAAAGVMKDIPAGETWGGMPARPIRHWLKETAWLARMANRRGPDGKGAGNDA.

The active-site Proton acceptor is His-245.

It belongs to the transferase hexapeptide repeat family. LpxD subfamily. In terms of assembly, homotrimer.

It catalyses the reaction a UDP-3-O-[(3R)-3-hydroxyacyl]-alpha-D-glucosamine + a (3R)-hydroxyacyl-[ACP] = a UDP-2-N,3-O-bis[(3R)-3-hydroxyacyl]-alpha-D-glucosamine + holo-[ACP] + H(+). It functions in the pathway bacterial outer membrane biogenesis; LPS lipid A biosynthesis. Catalyzes the N-acylation of UDP-3-O-acylglucosamine using 3-hydroxyacyl-ACP as the acyl donor. Is involved in the biosynthesis of lipid A, a phosphorylated glycolipid that anchors the lipopolysaccharide to the outer membrane of the cell. This Phenylobacterium zucineum (strain HLK1) protein is UDP-3-O-acylglucosamine N-acyltransferase.